The sequence spans 309 residues: UDP-N-acetylenolpyruvoylglucosamine reductase (309 aa).

In terms of domain architecture, FAD-binding PCMH-type spans 24–187 (RVGGPADWLF…TKAVFEAPRG (164 aa)). Arg167 is an active-site residue. The segment covering 200 to 213 (LARRDATQPTKERS) has biased composition (basic and acidic residues). The tract at residues 200 to 230 (LARRDATQPTKERSAGSTFRNPAGFSSTGRS) is disordered. The span at 214–228 (AGSTFRNPAGFSSTG) shows a compositional bias: polar residues. The active-site Proton donor is Ser216. Glu298 is an active-site residue.

It belongs to the MurB family. Requires FAD as cofactor.

The protein resides in the cytoplasm. The enzyme catalyses UDP-N-acetyl-alpha-D-muramate + NADP(+) = UDP-N-acetyl-3-O-(1-carboxyvinyl)-alpha-D-glucosamine + NADPH + H(+). The protein operates within cell wall biogenesis; peptidoglycan biosynthesis. Cell wall formation. This Roseobacter denitrificans (strain ATCC 33942 / OCh 114) (Erythrobacter sp. (strain OCh 114)) protein is UDP-N-acetylenolpyruvoylglucosamine reductase.